Reading from the N-terminus, the 195-residue chain is Glycerol-3-phosphate acyltransferase (195 aa).

The next 6 helical transmembrane spans lie at isoleucine 2 to isoleucine 22, isoleucine 54 to tyrosine 74, proline 80 to phenylalanine 100, glycine 107 to isoleucine 127, leucine 132 to proline 152, and alanine 155 to isoleucine 175.

Belongs to the PlsY family. Probably interacts with PlsX.

The protein resides in the cell inner membrane. The enzyme catalyses an acyl phosphate + sn-glycerol 3-phosphate = a 1-acyl-sn-glycero-3-phosphate + phosphate. It functions in the pathway lipid metabolism; phospholipid metabolism. Its function is as follows. Catalyzes the transfer of an acyl group from acyl-phosphate (acyl-PO(4)) to glycerol-3-phosphate (G3P) to form lysophosphatidic acid (LPA). This enzyme utilizes acyl-phosphate as fatty acyl donor, but not acyl-CoA or acyl-ACP. The protein is Glycerol-3-phosphate acyltransferase of Blochmanniella pennsylvanica (strain BPEN).